We begin with the raw amino-acid sequence, 494 residues long: MSAIMFVGTASNSGKSFLAAVTCAYLRQRGVDVAPFKSQNMSLNSCVAKENGEIAVAQAFQAAMAGQEPSIHHNPVLLKPKGELRSEVIVHGKPIGTMSYREYREIVFEDPWQAVLESAEILSEEHEVIVAEGAGSPAEINVLDTDIANLRVAEALGADVILVADISRGGAFAAVYGTIELLPERWRRLIKGFLFNKFLGDESLLEPGIKELERRLGVRYLGTVRHVGDFWMPWEDSEALDTHSPGRGSVRIAVIRLPRISNFTDFEPLAMEPDVRVEFVDPRDNLPEDADAVILPGTRTTISDLEELRKRGMDEEVVQAADEGTVVLGVCGGYQMLGRELVDESGGELDPGESVPGLGLLDAVTVFPSDAGKVTVRSEGVVNHPHLRGIRVEGFEIHEGRTYTDEPHLVRLRSGYGNRGCFLDGAYRTDRPVLGTYLHGIFFNRRFRHEFLRWVSGGRWKPPERDVVREAVKRNLQVALEIVESTDLPELLGE.

The GATase cobBQ-type domain occupies 249-447; that stretch reads SVRIAVIRLP…LHGIFFNRRF (199 aa). Residue C331 is the Nucleophile of the active site. H439 is a catalytic residue.

The protein belongs to the CobB/CobQ family. CobQ subfamily.

It participates in cofactor biosynthesis; adenosylcobalamin biosynthesis. Catalyzes amidations at positions B, D, E, and G on adenosylcobyrinic A,C-diamide. NH(2) groups are provided by glutamine, and one molecule of ATP is hydrogenolyzed for each amidation. In Methanopyrus kandleri (strain AV19 / DSM 6324 / JCM 9639 / NBRC 100938), this protein is Probable cobyric acid synthase.